Reading from the N-terminus, the 442-residue chain is tRNA modification GTPase MnmE (442 aa).

R24, E82, and K120 together coordinate (6S)-5-formyl-5,6,7,8-tetrahydrofolate. Residues 217-367 form the TrmE-type G domain; sequence GLHIVITGEP…LVSVIKEKVE (151 aa). GTP contacts are provided by residues 227–232, 246–252, and 271–274; these read NVGKST, SEYVGTT, and DTAG. 2 residues coordinate Mg(2+): S231 and T252. K442 serves as a coordination point for (6S)-5-formyl-5,6,7,8-tetrahydrofolate.

The protein belongs to the TRAFAC class TrmE-Era-EngA-EngB-Septin-like GTPase superfamily. TrmE GTPase family. In terms of assembly, homodimer. Heterotetramer of two MnmE and two MnmG subunits. K(+) serves as cofactor.

It localises to the cytoplasm. In terms of biological role, exhibits a very high intrinsic GTPase hydrolysis rate. Involved in the addition of a carboxymethylaminomethyl (cmnm) group at the wobble position (U34) of certain tRNAs, forming tRNA-cmnm(5)s(2)U34. This is tRNA modification GTPase MnmE from Wolbachia sp. subsp. Brugia malayi (strain TRS).